The primary structure comprises 300 residues: uncharacterized protein (300 aa).

Residues 230 to 251 (LRQSTSRQSISRQSISRQSTSR) are disordered. Low complexity predominate over residues 231–251 (RQSTSRQSISRQSISRQSTSR).

This is an uncharacterized protein from Acanthamoeba polyphaga (Amoeba).